Here is a 560-residue protein sequence, read N- to C-terminus: Dihydroxy-acid dehydratase (560 aa).

The disordered stretch occupies residues 1–20 (MGDNLKKRSSMTTDGDNRAP). Residue C52 participates in [2Fe-2S] cluster binding. Position 84 (D84) interacts with Mg(2+). C125 provides a ligand contact to [2Fe-2S] cluster. 2 residues coordinate Mg(2+): D126 and K127. K127 is subject to N6-carboxylysine. Position 197 (C197) interacts with [2Fe-2S] cluster. A Mg(2+)-binding site is contributed by E448. The Proton acceptor role is filled by S474.

It belongs to the IlvD/Edd family. Homodimer. [2Fe-2S] cluster is required as a cofactor. Requires Mg(2+) as cofactor.

It catalyses the reaction (2R)-2,3-dihydroxy-3-methylbutanoate = 3-methyl-2-oxobutanoate + H2O. It carries out the reaction (2R,3R)-2,3-dihydroxy-3-methylpentanoate = (S)-3-methyl-2-oxopentanoate + H2O. It participates in amino-acid biosynthesis; L-isoleucine biosynthesis; L-isoleucine from 2-oxobutanoate: step 3/4. The protein operates within amino-acid biosynthesis; L-valine biosynthesis; L-valine from pyruvate: step 3/4. In terms of biological role, functions in the biosynthesis of branched-chain amino acids. Catalyzes the dehydration of (2R,3R)-2,3-dihydroxy-3-methylpentanoate (2,3-dihydroxy-3-methylvalerate) into 2-oxo-3-methylpentanoate (2-oxo-3-methylvalerate) and of (2R)-2,3-dihydroxy-3-methylbutanoate (2,3-dihydroxyisovalerate) into 2-oxo-3-methylbutanoate (2-oxoisovalerate), the penultimate precursor to L-isoleucine and L-valine, respectively. This is Dihydroxy-acid dehydratase from Leptospira interrogans serogroup Icterohaemorrhagiae serovar copenhageni (strain Fiocruz L1-130).